The chain runs to 295 residues: Protease HtpX (295 aa).

Helical transmembrane passes span 4–24 (ILLF…TLSL) and 41–61 (SSLL…SLFI). H147 is a Zn(2+) binding site. The active site involves E148. H151 provides a ligand contact to Zn(2+). Transmembrane regions (helical) follow at residues 158–178 (VTLA…ARII) and 199–219 (VATI…VMWF). Position 224 (E224) interacts with Zn(2+).

The protein belongs to the peptidase M48B family. The cofactor is Zn(2+).

It localises to the cell inner membrane. The chain is Protease HtpX from Pseudomonas putida (strain ATCC 47054 / DSM 6125 / CFBP 8728 / NCIMB 11950 / KT2440).